We begin with the raw amino-acid sequence, 357 residues long: Probable glutamine amidotransferase DUG3 (357 aa).

C2 functions as the For GATase activity in the catalytic mechanism. Residues 2–260 form the Glutamine amidotransferase type-2 domain; that stretch reads CRFLIFKGKQ…PGEYRVERLD (259 aa).

The protein belongs to the DUG3 family. In terms of assembly, component of the GSH degradosomal complex composed of at least DUG1, DUG2 and DUG3.

Its subcellular location is the cytoplasm. Functionally, component of the GSH degradosomal complex involved in the degradation of glutathione (GSH) and other peptides containing a gamma-glu-X bond. In Saccharomyces cerevisiae (strain ATCC 204508 / S288c) (Baker's yeast), this protein is Probable glutamine amidotransferase DUG3 (DUG3).